Reading from the N-terminus, the 819-residue chain is Regulator of G-protein signaling rgs-7 (819 aa).

Residues 1–11 (MSDEDADEYDD) show a composition bias toward acidic residues. 3 disordered regions span residues 1–51 (MSDE…EMLW), 112–135 (GDDSSFRSRDRFVPPRRPRMGYGS), and 149–259 (SSTY…HNNE). A compositionally biased stretch (polar residues) spans 32 to 44 (YQDTTESTGPSEA). The span at 112-124 (GDDSSFRSRDRFV) shows a compositional bias: basic and acidic residues. Low complexity predominate over residues 149–166 (SSTYSSSSEAHRLSSLRA). The span at 173-185 (QLTSTTTSFQPLS) shows a compositional bias: polar residues. The segment covering 213 to 223 (RMYRKNPKYRR) has biased composition (basic residues). The segment covering 234–259 (SRLEESTSQESERAVTPESWMEHNNE) has biased composition (basic and acidic residues). Residues 290–429 (KHKDIRGIIF…KASQVVGDPF (140 aa)) enclose the C2 domain. 2 disordered regions span residues 515 to 594 (YRST…DDNG) and 617 to 640 (FTFSPKHSSSKTNLRQLNGREEDK). Polar residues-rich tracts occupy residues 517–533 (STGSSDMRGRSTNNLLD), 559–568 (PSITTTTSEN), and 617–632 (FTFSPKHSSSKTNLRQ). Residues 682–800 (SFESLLNNKF…LRDRLFLDLL (119 aa)) form the RGS domain.

Interacts with egl-30.

Inhibits signal transduction by increasing the GTPase activity of G protein alpha subunit egl-30 (G-alpha(q)), thereby driving it into its inactive GDP-bound form. May organize egl-30 into a stable multiprotein signaling complex, and thereby persistently inhibit egl-30 when triggered by calcium or phospholipids. This chain is Regulator of G-protein signaling rgs-7 (rgs-7), found in Caenorhabditis elegans.